A 110-amino-acid chain; its full sequence is HIT-like protein CPn_0488/CP_0266/CPj0488/CpB0508 (110 aa).

The region spanning 3–110 is the HIT domain; that stretch reads VFKQIIDGLI…LGGRPLGAIA (108 aa). A Histidine triad motif motif is present at residues 95–99; sequence HLHIH.

The protein is HIT-like protein CPn_0488/CP_0266/CPj0488/CpB0508 of Chlamydia pneumoniae (Chlamydophila pneumoniae).